Reading from the N-terminus, the 316-residue chain is HTH-type transcriptional regulator cbl (316 aa).

An HTH lysR-type domain is found at 1-59 (MNFQQLKIIREAARQDYNLTEVANMLYTSQSGVSRHIRELEEELGIEIFIRRGKRLLGM). The H-T-H motif DNA-binding region spans 19 to 38 (LTEVANMLYTSQSGVSRHIR).

It belongs to the LysR transcriptional regulatory family.

May be an accessory regulatory protein within the cys regulon. This Klebsiella aerogenes (Enterobacter aerogenes) protein is HTH-type transcriptional regulator cbl (cbl).